Here is a 283-residue protein sequence, read N- to C-terminus: Para-Rep C10 (283 aa).

The region spanning 3 to 96 (SIRAIHWCFT…IDGPWEYGTW (94 aa)) is the CRESS-DNA virus Rep endonuclease domain. An RCR-1 motif is present at residues 10-13 (CFTL). Residues glutamate 36 and histidine 42 each contribute to the a divalent metal cation site. The RCR-2 signature appears at 42 to 44 (HLQ). Residues 51–71 (KQTTLKKMKELLPGAHLEMAR) carry the Nuclear localization signal motif. Tyrosine 79 serves as the catalytic For DNA cleavage activity. The short motif at 79–82 (YCQK) is the RCR-3 element. Glutamate 84 contributes to the a divalent metal cation binding site. The short motif at 96-102 (WISTGSH) is the Nuclear localization signal element. Position 172–180 (172–180 (GPHGGEGKS)) interacts with ATP.

The protein belongs to the nanoviridea/circoviridae replication-associated protein family. In terms of assembly, homooligomer (Potential). Rep binds to repeated DNA motifs (iterons). Mg(2+) serves as cofactor. Requires Mn(2+) as cofactor.

It is found in the host nucleus. The enzyme catalyses ATP + H2O = ADP + phosphate + H(+). Functionally, initiates and terminates the replication only of its own subviral DNA molecule. The closed circular ssDNA genome is first converted to a superhelical dsDNA. Rep binds a specific hairpin at the genome origin of replication. Introduces an endonucleolytic nick within the intergenic region of the genome, thereby initiating the rolling circle replication (RCR). Following cleavage, binds covalently to the 5'-phosphate of DNA as a tyrosyl ester. The cleavage gives rise to a free 3'-OH that serves as a primer for the cellular DNA polymerase. The polymerase synthesizes the (+) strand DNA by rolling circle mechanism. After one round of replication, a Rep-catalyzed nucleotidyl transfer reaction releases a circular single-stranded virus genome, thereby terminating the replication. Displays origin-specific DNA cleavage, nucleotidyl transferase, ATPase and helicase activities. This chain is Para-Rep C10 (C10), found in Milk vetch dwarf C10 alphasatellite (MVDC10A).